A 462-amino-acid polypeptide reads, in one-letter code: MSKEYSTISKIYGPLMIVEGVKGVAYGEVVEIETESGEKRKGQVLDARENLAIVQVFEGTRDLDVKTTSVRFTGETLKVPVSMDMLGRIFNGIGKPIDGGPEIIPEDRRDVHGAPLNPVARAYPRDFIQTGISAIDGMNTLVRGQKLPIFSGSGLPHNQLAAQIARQAKVLGEEESFAVVFAAMGITYEEANFFKKSFEETGAIERAVLFLNLADDPAIERIITPRMALTVAEYLAFDYDMQVLVILTDMTNYCEALREISAAREEVPGRRGYPGYMYTDLATIYERAGRIRGKKGSITQMPILTMPDDDITHPIPDLTGYITEGQIVLSRELHRKGIYPPIDVLPSLSRLMKDGIGKGRTREDHPQLAQQLYAAYAEGRSLRDLVAVVGEEALSETDKKYLEFADRFEREFVAQGYYEDRSIEETLDLGWELLSILPESELKRVKKEMIMKYHPKYRKRSS.

It belongs to the ATPase alpha/beta chains family. In terms of assembly, has multiple subunits with at least A(3), B(3), C, D, E, F, H, I and proteolipid K(x).

It localises to the cell membrane. In terms of biological role, component of the A-type ATP synthase that produces ATP from ADP in the presence of a proton gradient across the membrane. The B chain is a regulatory subunit. The protein is A-type ATP synthase subunit B of Pyrococcus abyssi (strain GE5 / Orsay).